A 360-amino-acid polypeptide reads, in one-letter code: Peptide chain release factor 1 (360 aa).

An N5-methylglutamine modification is found at Gln237.

This sequence belongs to the prokaryotic/mitochondrial release factor family. Post-translationally, methylated by PrmC. Methylation increases the termination efficiency of RF1.

The protein resides in the cytoplasm. Peptide chain release factor 1 directs the termination of translation in response to the peptide chain termination codons UAG and UAA. In Pseudomonas entomophila (strain L48), this protein is Peptide chain release factor 1.